We begin with the raw amino-acid sequence, 652 residues long: Vacuolar fusion protein MON1 homolog A (652 aa).

The segment at 102–141 (MQRKRSSECLDGTLTPSDGQSMERAESPTPGMAQGMEPGA) is disordered. A phosphoserine mark is found at Ser-128 and Ser-153. Thr-158 is modified (phosphothreonine). The interval 158–185 (TESEDGAASGDSHKEGTRGPPPLPTDMR) is disordered. Ser-188 carries the post-translational modification Phosphoserine. The interval 211-245 (PGSSEDWLEPPGAVGRPATEPPREGTTEGDEEDAT) is disordered.

The protein belongs to the MON1/SAND family. In terms of assembly, interacts with CCZ1. Found in a complex with RMC1, CCZ1, MON1A and MON1B. The MON1A-CCZ1B complex interacts with RIMOC1. The MON1A-CCZ1B complex interacts with RAB7A and this interaction is enhanced in the presence of RIMOC1.

Its function is as follows. Plays an important role in membrane trafficking through the secretory apparatus. Not involved in endocytic trafficking to lysosomes. Acts in concert with CCZ1, as a guanine exchange factor (GEF) for RAB7, promotes the exchange of GDP to GTP, converting it from an inactive GDP-bound form into an active GTP-bound form. The polypeptide is Vacuolar fusion protein MON1 homolog A (MON1A) (Homo sapiens (Human)).